The chain runs to 337 residues: Serpentine receptor class delta-18 (337 aa).

6 helical membrane-spanning segments follow: residues 2 to 22, 90 to 110, 130 to 150, 187 to 207, 236 to 256, and 270 to 290; these read IIFF…LNLL, VGLS…LLSF, LILV…TIFA, IYSI…IFIL, ALTI…FYFL, and SIYA…LYFV.

It belongs to the nematode receptor-like protein srd family.

It is found in the membrane. The protein is Serpentine receptor class delta-18 (srd-18) of Caenorhabditis elegans.